A 228-amino-acid polypeptide reads, in one-letter code: UPF0758 protein CLD_1541 (228 aa).

Residues 106–228 form the MPN domain; the sequence is KINTPLDVSN…YVSMKEKGTI (123 aa). Zn(2+) contacts are provided by His177, His179, and Asp190. A JAMM motif motif is present at residues 177 to 190; sequence HNHPSGDPTPSKED.

This sequence belongs to the UPF0758 family.

This Clostridium botulinum (strain Okra / Type B1) protein is UPF0758 protein CLD_1541.